The sequence spans 341 residues: Probable UDP-glucuronate 4-epimerase (341 aa).

The Proton acceptor role is filled by Tyr-152.

It belongs to the NAD(P)-dependent epimerase/dehydratase family. NAD(+) serves as cofactor.

The catalysed reaction is UDP-alpha-D-glucuronate = UDP-alpha-D-galacturonate. This is Probable UDP-glucuronate 4-epimerase from Rhizobium meliloti (strain 1021) (Ensifer meliloti).